Here is a 1312-residue protein sequence, read N- to C-terminus: MASIFLNKKTIETNNFIFNDNRPKNIKIVDKIKSSTVEFFHSIQKHIQQVKVENNNNNNNNNNNSENNKYKRSQSEENINNYIQNHFNPPQPQKKRNILFIFQNLINSGNSNNNNSSNSSCNSTPSTSPSSTPRSTNSPRSTYSPRNNNNNFTESSSDNQQFDITFNMVVEKERVILTVKVPEVGLTKKILFDKVETIKDAILLVIEKLPPGCLDASEYNLFLPQKNQWCKIDSRFSKYQFKENQEIEFKKDSRGGVSHMLSNVGNLLTRPYRTIYIKLPEIVTVGTLPPLQINGQIGDLPSLNNSLNNSLNNISSSSSGGTGGGSGTTAAATGSSLSNSNSNSNLQNSQSANNSPIIHRRRTSSFSYDPNIHHSSLTHSNSNSNLISTNTSSIGNSAPSPTTLGSKPFSIPKLNLTENNLNNSSSTSSSPRNNGNEVIQSSSSTSSPRVNAPPPLEHKKSFLNIIGISPRGTNRERSSSTNSLNNSTSSLKSSNNNILQQQQQQQQHYDSAPTTPRNFGTFVRTQQLQNQQQQLQQQESIEAFDFEDDSTLGEVLNKICTRYQYIEKDLLEDYSLITKDGLWFVDRNKTITELGLKHMDEVEFKRMTQKVKVVFLNKEIVLNFNPSDTLKEINYKIIVHYLPSLIKLSRSNSILSSSSSSIFLNHQSSSSSNSSSSPSQSYRSSLSLEPLVISDLENSQILSNTPTITTVGNHQILNLQQQQNKQRSYSDASPLSFSKDYTSEISNHQQQNIENHINRRKNSISTNPLTNSGNIANNNNNNNNNKDKDDNNNNNNNNNNNNNNNNNNNNNNNNNNIASSTDTIQSNSSTGSLGSNNNIAFSIQQNRYPIPDNLVEFKDFKLHLSGTKNQNPNINQKFDMLLDERRTLSSFNFWNNIKLHFKNSSKSLHSDSKRVAPTLPFYLQIESVEQFSVSHILELEGTLLISDILKSFNRLLLNNENIKINDPLDEYGLFFNTVNNGNREGLSYGSSIYLDPYKTLSHYPMIEPLDKLMFKRTNTIFGVDPNTIVSKIDPITGFNIPCLLLDLKQKFIELDGFSIEGIFKTNNYYDLTFTEIIKEIENGTLLTSNNPNVDAIGIACFIKRWFSKLPKKICSLLDDETLLYASTQESTAEASLDSIPQPYRSLLLWLVRFLSEVSQSAYTNKCSAKILAIVIAPNLISISPNNNNNNKENNDHHHHHHHHHNSHHHRDNNNNNSNNNSSTTPTSSSVGKYTSLEKLHQCTLFLRNLIKLKLRENGFLPISTSSISISNSHNSSSFISMTGTSETSIHSSNSPISSSISRSPSLTDIVEE.

Disordered stretches follow at residues 52–74, 111–158, 314–519, 762–831, 1185–1230, and 1282–1312; these read VENN…KRSQ, SNNN…SSSD, ISSS…PRNF, NSIS…SSTG, NNNN…SSSV, and TGTS…IVEE. Low complexity-rich tracts occupy residues 53–67 and 111–146; these read ENNN…NSEN and SNNN…YSPR. Residues 147 to 158 show a composition bias toward polar residues; it reads NNNNNFTESSSD. Composition is skewed to low complexity over residues 328-355, 373-397, and 414-436; these read TTAA…ANNS, HHSS…IGNS, and LNLT…NNGN. Residues 437 to 449 show a composition bias toward polar residues; that stretch reads EVIQSSSSTSSPR. Over residues 479 to 507 the composition is skewed to low complexity; it reads SSTNSLNNSTSSLKSSNNNILQQQQQQQQ. Composition is skewed to polar residues over residues 508 to 518 and 763 to 776; these read HYDSAPTTPRN and SIST…GNIA. Low complexity predominate over residues 792 to 816; the sequence is NNNNNNNNNNNNNNNNNNNNNNNNN. The 183-residue stretch at 1030–1212 folds into the Rho-GAP domain; it reads SKIDPITGFN…HHNSHHHRDN (183 aa). A compositionally biased stretch (basic residues) spans 1196 to 1210; that stretch reads HHHHHHHHHNSHHHR. 2 stretches are compositionally biased toward low complexity: residues 1213–1222 and 1282–1305; these read NNNNSNNNSS and TGTS…RSPS.

The protein resides in the cytoplasm. Its function is as follows. Rho GTPase-activating protein involved in the signal transduction pathway. In Dictyostelium discoideum (Social amoeba), this protein is Rho GTPase-activating protein gacG (gacG).